A 236-amino-acid polypeptide reads, in one-letter code: Ascorbate-specific transmembrane electron transporter 2 (236 aa).

Topologically, residues 1 to 13 (MGLGLGVRAAPFT) are cytoplasmic. The helical transmembrane segment at 14 to 34 (YAAHALAVAAAAMVLVWAIYF) threads the bilayer. A Cytochrome b561 domain is found at 15 to 219 (AAHALAVAAA…FGASVVVAAI (205 aa)). The Extracellular portion of the chain corresponds to 35–50 (RGGLAIEATNKNLIFN). A helical membrane pass occupies residues 51–71 (VHPVLMLIGYIIIGGEAIMVY). H52 contacts heme b. 67–75 (AIMVYRVLP) provides a ligand contact to L-ascorbate. The Cytoplasmic portion of the chain corresponds to 72-84 (RVLPTSNHETNKL). A helical transmembrane segment spans residues 85-105 (IHLVLHGIALVLGAVGIYFAF). 2 residues coordinate heme b: H86 and H120. Topologically, residues 106–122 (KNHNESGIANLYSLHSW) are extracellular. 116-125 (LYSLHSWIGI) is a monodehydro-L-ascorbate radical binding site. A helical membrane pass occupies residues 123 to 143 (IGIGTITLYGIQWIVGFVTFF). The Cytoplasmic portion of the chain corresponds to 144–153 (FPGAAPNVKK). Residues 154-174 (GVLPWHILFGLFVYILALANA) traverse the membrane as a helical segment. A heme b-binding site is contributed by H159. The Extracellular segment spans residues 175–201 (ELGFLEKLTFLESSGLDKYGTEAFLVN). Residues 202 to 222 (FTALVVVLFGASVVVAAIAPV) traverse the membrane as a helical segment. Residues 223–236 (RLEEPQGYVPIPEN) are Cytoplasmic-facing.

The cofactor is heme b.

The protein localises to the membrane. Functionally, two-heme-containing cytochrome. Catalyzes ascorbate-dependent trans-membrane electron transfer by utilizing a concerted H(+)/e(-) transfer mechanism. The polypeptide is Ascorbate-specific transmembrane electron transporter 2 (Zea mays (Maize)).